The primary structure comprises 251 residues: Eukaryotic translation initiation factor 4E-3 (251 aa).

A disordered region spans residues 200–251 (DSSARTSSTVKPRICLPAKDPAPVKEKGPAATTSPSNPGTEATGTSPATPTP). Residues 230-251 (ATTSPSNPGTEATGTSPATPTP) are compositionally biased toward polar residues.

This sequence belongs to the eukaryotic initiation factor 4E family. In terms of assembly, eIF4F is a multi-subunit complex, the composition of which varies with external and internal environmental conditions. It is composed of at least eIF4A, eIF4E and eIF4G. eIF4E is also known to interact with other partners. Interacts with mxt. Component of the pid-1 variant of the PETISCO complex (also called the pid-3, erh-2, tofu-6, and ife-3 small RNA complex) containing at least pid-1, tofu-6, ife-3, pid-3, and erh-2, which is required for the biogenesis of a class of 21 nucleotide PIWI-interacting RNAs (piRNAs) that possess a uracil residue at the 5'-end (also called 21U-RNAs). Component of the tost-1 variant of the PETISCO complex (also called the pid-3, erh-2, tofu-6, and ife-3 small RNA complex) containing at least tost-1, tofu-6, ife-3, pid-3, and erh-2, which plays an essential role in embryogenesis. Within the pid-1 and tost-1 variants of the PETISCO complexes interacts with tofu-6 (via C-terminus). In contrast to the pid-1 variant of the PETISCO complex, the tost-1 variant of the PETISCO complex plays a minor role in the biogenesis of 21U-RNAs. In terms of tissue distribution, highly expressed in the germline (at protein level).

The protein localises to the cytoplasmic granule. It is found in the cytoplasm. It localises to the perinuclear region. Recognizes and binds the 7-methylguanosine-containing mRNA cap during an early step in the initiation of protein synthesis and facilitates ribosome binding by inducing the unwinding of the mRNAs secondary structures. All 5 eIF4E proteins bind monomethyl cap structures. Only ife-1, ife-2 and ife-5 bind trimethyl cap structures which result from trans-splicing. Translation of trimethyl cap structure mRNAs may be regulated by intracellular redox state; disulfide bonds change the width and depth of the cap-binding cavity determining selectivity to mRNA caps. Ife-3 is essential for viability. Component of the pid-1 and tost-1 variants of the PETISCO complexes, which have roles in the biogenesis of a class of 21 nucleotide PIWI-interacting RNAs (piRNAs) that possess a uracil residue at the 5'-end (also called 21U-RNAs) and embryogenesis, respectively. Within the pid-1 variant of the PETISCO complex binds to capped 21U-RNA precursor molecules, possibly playing a role in the processing of the 5' end of the molecules to promote binding of other complex components such as pid-3. However, it is not essential for the biogenesis of 21U-RNAs by itself. Within the tost-1 variant of the PETISCO complex binds to splice leader SL1 RNA fragments to possibly play a role in their processing. The sequence is that of Eukaryotic translation initiation factor 4E-3 from Caenorhabditis elegans.